Here is a 514-residue protein sequence, read N- to C-terminus: UDP-N-acetylmuramoyl-L-alanyl-D-glutamate--2,6-diaminopimelate ligase (514 aa).

UDP-N-acetyl-alpha-D-muramoyl-L-alanyl-D-glutamate is bound at residue Thr-37. 125–131 (GTNGKTS) contributes to the ATP binding site. Residues 167–168 (TT), Ser-194, Gln-200, and Arg-202 each bind UDP-N-acetyl-alpha-D-muramoyl-L-alanyl-D-glutamate. Lys-234 is subject to N6-carboxylysine. Meso-2,6-diaminopimelate is bound by residues Arg-406, 430–433 (DNPR), Gly-481, and Glu-485. The Meso-diaminopimelate recognition motif motif lies at 430–433 (DNPR).

The protein belongs to the MurCDEF family. MurE subfamily. It depends on Mg(2+) as a cofactor. Post-translationally, carboxylation is probably crucial for Mg(2+) binding and, consequently, for the gamma-phosphate positioning of ATP.

The protein resides in the cytoplasm. The enzyme catalyses UDP-N-acetyl-alpha-D-muramoyl-L-alanyl-D-glutamate + meso-2,6-diaminopimelate + ATP = UDP-N-acetyl-alpha-D-muramoyl-L-alanyl-gamma-D-glutamyl-meso-2,6-diaminopimelate + ADP + phosphate + H(+). The protein operates within cell wall biogenesis; peptidoglycan biosynthesis. In terms of biological role, catalyzes the addition of meso-diaminopimelic acid to the nucleotide precursor UDP-N-acetylmuramoyl-L-alanyl-D-glutamate (UMAG) in the biosynthesis of bacterial cell-wall peptidoglycan. This Ralstonia nicotianae (strain ATCC BAA-1114 / GMI1000) (Ralstonia solanacearum) protein is UDP-N-acetylmuramoyl-L-alanyl-D-glutamate--2,6-diaminopimelate ligase.